Consider the following 541-residue polypeptide: Cytochrome P450 67 (541 aa).

Cysteine 479 lines the heme pocket.

This sequence belongs to the cytochrome P450 family. Heme serves as cofactor.

The chain is Cytochrome P450 67 (CYP67) from Uromyces fabae (Rust fungus).